The primary structure comprises 412 residues: NF-kappa-B essential modulator (412 aa).

Positions 1-48 are disordered; it reads MSRHLWKNQLSEMVQPSGGPAEDQDMLGEESSLGKPAMLHLPSEQGTP. Positions 1 to 197 are required for interaction with and ubiquitination by MARCHF2; sequence MSRHLWKNQL…REVLQQQHSV (197 aa). Serine 31 and serine 43 each carry phosphoserine; by IKKB. Residues 44–111 are interaction with CHUK/IKBKB; that stretch reads EQGTPETLQR…KLVERLSLEK (68 aa). A coiled-coil region spans residues 49–343; it reads ETLQRCLEEN…NKLKVGCHES (295 aa). Serine 68 carries the post-translational modification Phosphoserine. Serine 85 carries the post-translational modification Phosphoserine; by ATM. Residues lysine 111, lysine 139, lysine 143, lysine 226, and lysine 246 each participate in a glycyl lysine isopeptide (Lys-Gly) (interchain with G-Cter in ubiquitin) cross-link. Positions 150 to 250 are interaction with TANK; sequence LGELQESQSR…YDSHIKSSKG (101 aa). Residues 242–343 are ubiquitin-binding (UBAN); sequence DSHIKSSKGM…NKLKVGCHES (102 aa). Residues 246-358 form a self-association region; the sequence is KSSKGMQLED…MRKRHVETSQ (113 aa). A required for interaction with TNFAIP3 region spans residues 249 to 412; the sequence is KGMQLEDLRQ…LQIHVMECIE (164 aa). Lysine 270 is covalently cross-linked (Glycyl lysine isopeptide (Lys-Gly) (interchain with G-Cter in SUMO); alternate). Lysine 270 participates in a covalent cross-link: Glycyl lysine isopeptide (Lys-Gly) (interchain with G-Cter in ubiquitin); alternate. Glycyl lysine isopeptide (Lys-Gly) (interchain with G-Cter in ubiquitin) cross-links involve residues lysine 276, lysine 278, lysine 285, and lysine 295. Lysine 302 participates in a covalent cross-link: Glycyl lysine isopeptide (Lys-Gly) (interchain with G-Cter in SUMO); alternate. Residue lysine 302 forms a Glycyl lysine isopeptide (Lys-Gly) (interchain with G-Cter in ubiquitin); alternate linkage. Residues lysine 314 and lysine 319 each participate in a glycyl lysine isopeptide (Lys-Gly) (interchain with G-Cter in ubiquitin) cross-link. A leucine-zipper region spans residues 315–336; that stretch reads LVERKELLQEQLEQLQREFNKL. Serine 369 carries the post-translational modification Phosphoserine; by IKKB. Positions 375 to 412 are interaction with CYLD; it reads SNQRRSPPEEPPDFCCPKCQYQAPDMDTLQIHVMECIE. Serine 380 bears the Phosphoserine mark. The CCHC NOA-type zinc finger occupies 382–412; sequence PEEPPDFCCPKCQYQAPDMDTLQIHVMECIE. A Zn(2+)-binding site is contributed by cysteine 390. Lysine 392 is covalently cross-linked (Glycyl lysine isopeptide (Lys-Gly) (interchain with G-Cter in ubiquitin)). Zn(2+) is bound by residues cysteine 393, histidine 406, and cysteine 410.

As to quaternary structure, homodimer; disulfide-linked. Component of the I-kappa-B-kinase (IKK) core complex consisting of CHUK, IKBKB and IKBKG; probably four alpha/CHUK-beta/IKBKB dimers are associated with four gamma/IKBKG subunits. The IKK core complex seems to associate with regulatory or adapter proteins to form a IKK-signalosome holo-complex. The IKK complex associates with TERF2IP/RAP1, leading to promote IKK-mediated phosphorylation of RELA/p65. Part of a complex composed of NCOA2, NCOA3, CHUK/IKKA, IKBKB, IKBKG and CREBBP. Interacts with COPS3, CYLD, NALP2, TRPC4AP and PIDD1. Interacts with ATM; the complex is exported from the nucleus. Interacts with TRAF6. Interacts with IKBKE. Interacts with TANK; the interaction is enhanced by IKBKE and TBK1. Part of a ternary complex consisting of TANK, IKBKB and IKBKG. Interacts with ZFAND5. Interacts with RIPK2. Interacts with TNIP1 and TNFAIP3; TNIP1 facilitates the TNFAIP3-mediated de-ubiquitination of IKBKG. Interacts with TNFAIP3; the interaction is induced by TNF stimulation and by polyubiquitin. Binds (via UBAN region) polyubiquitin; binds both 'Lys-63'-linked and linear polyubiquitin, with higher affinity for linear ubiquitin. Interacts with NLRP10. Interacts with TANK; this interaction increases in response to DNA damage. Interacts with USP10; this interaction increases in response to DNA damage. Interacts with ZC3H12A; this interaction increases in response to DNA damage. Interacts with IFIT5; the interaction synergizes the recruitment of IKK to MAP3K7 and enhances IKK phosphorylation. Interacts with TRIM29; this interaction induces IKBKG/NEMO ubiquitination and proteolytic degradation. Interacts with TRIM13; this interaction leads to IKBKG/NEMO ubiquitination. Interacts with ARFIP2. Interacts with RIPK1. Interacts with (ubiquitinated) BCL10; interaction with polyubiquitinated BCL10 via both 'Lys-63'-linked and linear ubiquitin is required for TCR-induced NF-kappa-B activation. Interacts with MARCHF2; during the late stages of macrophage viral and bacterial infection; the interaction leads to ubiquitination and degradation of IKBKG/NEMO. Phosphorylation at Ser-68 attenuates aminoterminal homodimerization. In terms of processing, polyubiquitinated on Lys-278 via 'Lys-63'-linked ubiquitin; the ubiquitination is mediated downstream of NOD2 and RIPK2 and probably plays a role in signaling by facilitating interactions with ubiquitin domain-containing proteins and activates the NF-kappa-B pathway. Polyubiquitinated on Lys-278 and Lys-302 through 'Lys-63'-linked ubiquitin; the ubiquitination is mediated by BCL10, MALT1 and TRAF6 and probably plays a role in signaling by facilitating interactions with ubiquitin domain-containing proteins and activates the NF-kappa-B pathway. Monoubiquitinated on Lys-270 and Lys-302; promotes nuclear export. Polyubiquitinated through 'Lys-27' by TRIM23; involved in antiviral innate and inflammatory responses. Linear polyubiquitinated on Lys-111, Lys-143, Lys-226, Lys-246, Lys-270, Lys-278, Lys-285, Lys-295, Lys-302 and Lys-319; the head-to-tail polyubiquitination is mediated by the LUBAC complex and plays a key role in NF-kappa-B activation. Deubiquitinated by USP10 in a TANK-dependent and -independent manner, leading to the negative regulation of NF-kappa-B signaling upon DNA damage. Ubiquitinated at Lys-319 by MARCHF2 following bacterial and viral infection which leads to its degradation. Polyubiquitinated via 'Lys-29'-linked ubiquitin; leading to lysosomal degradation. Post-translationally, sumoylated on Lys-270 and Lys-302 with SUMO1; the modification results in phosphorylation of Ser-85 by ATM leading to a replacement of the sumoylation by mono-ubiquitination on these residues. Neddylated by TRIM40, resulting in stabilization of NFKBIA and down-regulation of NF-kappa-B activity.

It localises to the cytoplasm. The protein localises to the nucleus. Functionally, regulatory subunit of the IKK core complex which phosphorylates inhibitors of NF-kappa-B thus leading to the dissociation of the inhibitor/NF-kappa-B complex and ultimately the degradation of the inhibitor. Its binding to scaffolding polyubiquitin plays a key role in IKK activation by multiple signaling receptor pathways. Can recognize and bind both 'Lys-63'-linked and linear polyubiquitin upon cell stimulation, with a much highr affinity for linear polyubiquitin. Could be implicated in NF-kappa-B-mediated protection from cytokine toxicity. Essential for viral activation of IRF3. Involved in TLR3- and IFIH1-mediated antiviral innate response; this function requires 'Lys-27'-linked polyubiquitination. The chain is NF-kappa-B essential modulator (Ikbkg) from Rattus norvegicus (Rat).